The chain runs to 155 residues: Photosystem II extrinsic protein V (155 aa).

The N-terminal stretch at 1–20 (MFVKMIGWLVLFLFAHQTWA) is a signal peptide. Positions 50, 53, 54, and 105 each coordinate heme c.

The protein belongs to the cytochrome c family. PsbV subfamily. In terms of assembly, PSII is composed of 1 copy each of membrane proteins PsbA, PsbB, PsbC, PsbD, PsbE, PsbF, PsbH, PsbI, PsbJ, PsbK, PsbL, PsbM, PsbT, PsbY, PsbZ, Psb30/Ycf12, at least 3 peripheral proteins of the oxygen-evolving complex and a large number of cofactors. It forms dimeric complexes. The extrinsic subunits in red algae are PsbO (OEC33), PsbQ', cytochrome c-550 and PsbU. Heme c is required as a cofactor.

The protein resides in the plastid. The protein localises to the chloroplast thylakoid membrane. In terms of biological role, one of the extrinsic, lumenal subunits of photosystem II (PSII). PSII is a light-driven water plastoquinone oxidoreductase, using light energy to abstract electrons from H(2)O, generating a proton gradient subsequently used for ATP formation. The extrinsic proteins stabilize the structure of photosystem II oxygen-evolving complex (OEC), the ion environment of oxygen evolution and protect the OEC against heat-induced inactivation. Unlike the T.vulcanus ortholog, it does not bind by itself to PSII, but requires all extrinsic members of the OEC. The polypeptide is Photosystem II extrinsic protein V (Cyanidium caldarium (Red alga)).